The following is a 913-amino-acid chain: Eukaryotic translation initiation factor 3 subunit C (913 aa).

The interval 1–44 (MSRFFTTGSDSESESSLSGEELVTKPVGGNYGKQPLLLSEDEED) is disordered. Positions 8–21 (GSDSESESSLSGEE) are enriched in low complexity. 7 positions are modified to phosphoserine: Ser9, Ser11, Ser13, Ser15, Ser16, Ser18, and Ser39. Lys99 carries the N6-acetyllysine modification. Disordered stretches follow at residues 157 to 301 (TSYK…GGEW) and 522 to 542 (QLTP…NEGE). Phosphoserine is present on residues Ser166, Ser178, Ser181, and Ser182. A compositionally biased stretch (acidic residues) spans 166–190 (SADEDAEKNEEDSEGSSDEDEDEDG). The segment covering 199 to 216 (KKSEAPSGESRKFLKKMD) has biased composition (basic and acidic residues). Positions 217 to 232 (DEDEDSEDSEDDEDWD) are enriched in acidic residues. Residues 261 to 278 (PTTDEDKKAAEKKREDKA) are compositionally biased toward basic and acidic residues. A compositionally biased stretch (polar residues) spans 522–531 (QLTPPEGSSK). The residue at position 524 (Thr524) is a Phosphothreonine. The residue at position 643 (Lys643) is an N6-acetyllysine. Residues 673–849 (FHLHINLELL…QTVVMHRTEP (177 aa)) enclose the PCI domain. The interval 885-913 (FRDQKDGYRKNEGYMRRGGYRQQQSQTAY) is disordered. The span at 886 to 899 (RDQKDGYRKNEGYM) shows a compositional bias: basic and acidic residues. Position 909 is a phosphoserine (Ser909).

In terms of assembly, component of the eukaryotic translation initiation factor 3 (eIF-3) complex, which is composed of 13 subunits: EIF3A, EIF3B, EIF3C, EIF3D, EIF3E, EIF3F, EIF3G, EIF3H, EIF3I, EIF3J, EIF3K, EIF3L and EIF3M. The eIF-3 complex appears to include 3 stable modules: module A is composed of EIF3A, EIF3B, EIF3G and EIF3I; module B is composed of EIF3F, EIF3H, and EIF3M; and module C is composed of EIF3C, EIF3D, EIF3E, EIF3K and EIF3L. EIF3C of module C binds EIF3B of module A and EIF3H of module B, thereby linking the three modules. EIF3J is a labile subunit that binds to the eIF-3 complex via EIF3B. The eIF-3 complex interacts with RPS6KB1 under conditions of nutrient depletion. Mitogenic stimulation leads to binding and activation of a complex composed of MTOR and RPTOR, leading to phosphorylation and release of RPS6KB1 and binding of EIF4B to eIF-3. Identified in a HCV IRES-mediated translation complex, at least composed of EIF3C, IGF2BP1, RPS3 and HCV RNA-replicon. Interacts with ALKBH4, IFIT1 and IFIT2. Interacts with BZW2/5MP1. Phosphorylated. Phosphorylation is enhanced upon serum stimulation.

Its subcellular location is the cytoplasm. In terms of biological role, component of the eukaryotic translation initiation factor 3 (eIF-3) complex, which is required for several steps in the initiation of protein synthesis. The eIF-3 complex associates with the 40S ribosome and facilitates the recruitment of eIF-1, eIF-1A, eIF-2:GTP:methionyl-tRNAi and eIF-5 to form the 43S pre-initiation complex (43S PIC). The eIF-3 complex stimulates mRNA recruitment to the 43S PIC and scanning of the mRNA for AUG recognition. The eIF-3 complex is also required for disassembly and recycling of post-termination ribosomal complexes and subsequently prevents premature joining of the 40S and 60S ribosomal subunits prior to initiation. The eIF-3 complex specifically targets and initiates translation of a subset of mRNAs involved in cell proliferation, including cell cycling, differentiation and apoptosis, and uses different modes of RNA stem-loop binding to exert either translational activation or repression. This Homo sapiens (Human) protein is Eukaryotic translation initiation factor 3 subunit C.